Reading from the N-terminus, the 525-residue chain is Peptide chain release factor 3 (525 aa).

The tr-type G domain maps to 9–276 (AKRRTFAIIS…GFTRYAPAPQ (268 aa)). GTP contacts are provided by residues 18–25 (SHPDAGKT), 86–90 (DTPGH), and 140–143 (NKFD).

Belongs to the TRAFAC class translation factor GTPase superfamily. Classic translation factor GTPase family. PrfC subfamily.

The protein resides in the cytoplasm. Functionally, increases the formation of ribosomal termination complexes and stimulates activities of RF-1 and RF-2. It binds guanine nucleotides and has strong preference for UGA stop codons. It may interact directly with the ribosome. The stimulation of RF-1 and RF-2 is significantly reduced by GTP and GDP, but not by GMP. The protein is Peptide chain release factor 3 of Francisella tularensis subsp. tularensis (strain WY96-3418).